Reading from the N-terminus, the 215-residue chain is Pyrrolidone-carboxylate peptidase (215 aa).

Active-site residues include glutamate 78, cysteine 141, and histidine 165.

This sequence belongs to the peptidase C15 family. Homotetramer.

It localises to the cytoplasm. The catalysed reaction is Release of an N-terminal pyroglutamyl group from a polypeptide, the second amino acid generally not being Pro.. In terms of biological role, removes 5-oxoproline from various penultimate amino acid residues except L-proline. This Streptococcus suis (strain 98HAH33) protein is Pyrrolidone-carboxylate peptidase.